The primary structure comprises 388 residues: Succinyl-diaminopimelate desuccinylase (388 aa).

A Zn(2+)-binding site is contributed by His84. Asp86 is an active-site residue. Asp115 provides a ligand contact to Zn(2+). Glu146 (proton acceptor) is an active-site residue. Zn(2+) is bound by residues Glu147, Glu175, and His360.

This sequence belongs to the peptidase M20A family. DapE subfamily. Homodimer. It depends on Zn(2+) as a cofactor. The cofactor is Co(2+).

It carries out the reaction N-succinyl-(2S,6S)-2,6-diaminopimelate + H2O = (2S,6S)-2,6-diaminopimelate + succinate. Its pathway is amino-acid biosynthesis; L-lysine biosynthesis via DAP pathway; LL-2,6-diaminopimelate from (S)-tetrahydrodipicolinate (succinylase route): step 3/3. Its function is as follows. Catalyzes the hydrolysis of N-succinyl-L,L-diaminopimelic acid (SDAP), forming succinate and LL-2,6-diaminopimelate (DAP), an intermediate involved in the bacterial biosynthesis of lysine and meso-diaminopimelic acid, an essential component of bacterial cell walls. In Helicobacter pylori (strain G27), this protein is Succinyl-diaminopimelate desuccinylase.